The primary structure comprises 397 residues: Acetyl-CoA acetyltransferase (397 aa).

Cys-95 acts as the Acyl-thioester intermediate in catalysis. CoA-binding residues include Tyr-187 and Lys-230. Residue Tyr-187 coordinates K(+). Residues Ala-246, Gly-247, and Ala-249 each contribute to the K(+) site. CoA is bound at residue Ser-250. Val-347 contributes to the K(+) binding site. Residues His-351 and Cys-379 each act as proton acceptor in the active site.

Belongs to the thiolase-like superfamily. Thiolase family.

Its subcellular location is the peroxisome. The enzyme catalyses 2 acetyl-CoA = acetoacetyl-CoA + CoA. Essential for n-decane utilization. This chain is Acetyl-CoA acetyltransferase (PAT1), found in Yarrowia lipolytica (strain CLIB 122 / E 150) (Yeast).